The primary structure comprises 159 residues: MHIHIISVGKLKEKYLMQGIDEYKKRLSSYAKVDIIEVPDEKAPEHLSEQEMEQIKQREGERILAKIPNDAYVIALAIEGKMKSSEQFAASLDKLATYGKSKIAFIIGGSLGLSKQVMQRADEALSFSKMTFPHQLMRLILLEQIYRAFRINRGEPYHK.

Residues L76, G108, and 127-132 contribute to the S-adenosyl-L-methionine site; that span reads FSKMTF.

Belongs to the RNA methyltransferase RlmH family. As to quaternary structure, homodimer.

The protein localises to the cytoplasm. It carries out the reaction pseudouridine(1915) in 23S rRNA + S-adenosyl-L-methionine = N(3)-methylpseudouridine(1915) in 23S rRNA + S-adenosyl-L-homocysteine + H(+). Its function is as follows. Specifically methylates the pseudouridine at position 1915 (m3Psi1915) in 23S rRNA. This is Ribosomal RNA large subunit methyltransferase H from Geobacillus sp. (strain WCH70).